Reading from the N-terminus, the 128-residue chain is GKMNFTDCGHNEIKELSVSNCTGNYCVIHRGKPLTLDAKFDANQDTASVGLVLTAIIDGDIAIDIPGLETNACKLMKCPIRKGEHQELIYNIGEIPDATPEIKAKVKAQLIGEHGVLACGWVDGEVQE.

It belongs to the NPC2 family.

The protein resides in the secreted. This chain is Mite group 2 allergen Gly d 2.01, found in Glycyphagus domesticus (House itch mite).